The sequence spans 844 residues: Serrate RNA effector molecule homolog B (844 aa).

Disordered stretches follow at residues 1-90 (MADS…HGSD), 277-401 (EAAK…PRPL), 555-575 (ELLSSAGRTPETEAPKEGNPT), and 794-825 (PNPYGAGRGNYDSFRGQGMYPGKPRNRMMRGD). 2 stretches are compositionally biased toward basic and acidic residues: residues 16–73 (FRRE…RHDI) and 277–337 (EAAK…ETRK). The segment covering 349–359 (SDDGSDSESDT) has biased composition (acidic residues). Residues 376-397 (DTPKKEEETEKPKEKPKEDTVK) are compositionally biased toward basic and acidic residues.

This sequence belongs to the ARS2 family. In terms of assembly, interacts ncbp1/cbp80.

The protein localises to the nucleus. Its subcellular location is the nucleoplasm. The protein resides in the cytoplasm. Acts as a mediator between the cap-binding complex (CBC) and the primary microRNAs (miRNAs) processing machinery during cell proliferation. Contributes to the stability and delivery of capped primary miRNA transcripts to the primary miRNA processing complex, thereby playing a role in RNA-mediated gene silencing (RNAi) by miRNAs. The protein is Serrate RNA effector molecule homolog B (srrt-b) of Xenopus laevis (African clawed frog).